The following is a 35-amino-acid chain: Tamulustoxin-2 (35 aa).

3 disulfides stabilise this stretch: Cys2–Cys22, Cys7–Cys31, and Cys11–Cys33.

The protein belongs to the short scorpion toxin superfamily. Potassium channel inhibitor family. Expressed by the venom gland.

Its subcellular location is the secreted. Functionally, blocks Kv1.6/KCNA6 potassium channels. In Hottentotta tamulus (Eastern Indian scorpion), this protein is Tamulustoxin-2.